The primary structure comprises 459 residues: UDP-N-acetylmuramoylalanine--D-glutamate ligase (459 aa).

131 to 137 (GANGKST) is a binding site for ATP.

This sequence belongs to the MurCDEF family.

Its subcellular location is the cytoplasm. It catalyses the reaction UDP-N-acetyl-alpha-D-muramoyl-L-alanine + D-glutamate + ATP = UDP-N-acetyl-alpha-D-muramoyl-L-alanyl-D-glutamate + ADP + phosphate + H(+). It participates in cell wall biogenesis; peptidoglycan biosynthesis. In terms of biological role, cell wall formation. Catalyzes the addition of glutamate to the nucleotide precursor UDP-N-acetylmuramoyl-L-alanine (UMA). This chain is UDP-N-acetylmuramoylalanine--D-glutamate ligase, found in Methylococcus capsulatus (strain ATCC 33009 / NCIMB 11132 / Bath).